Reading from the N-terminus, the 262-residue chain is Acyl-[acyl-carrier-protein]--UDP-N-acetylglucosamine O-acyltransferase (262 aa).

The protein belongs to the transferase hexapeptide repeat family. LpxA subfamily. In terms of assembly, homotrimer.

The protein resides in the cytoplasm. The enzyme catalyses a (3R)-hydroxyacyl-[ACP] + UDP-N-acetyl-alpha-D-glucosamine = a UDP-3-O-[(3R)-3-hydroxyacyl]-N-acetyl-alpha-D-glucosamine + holo-[ACP]. It participates in glycolipid biosynthesis; lipid IV(A) biosynthesis; lipid IV(A) from (3R)-3-hydroxytetradecanoyl-[acyl-carrier-protein] and UDP-N-acetyl-alpha-D-glucosamine: step 1/6. Involved in the biosynthesis of lipid A, a phosphorylated glycolipid that anchors the lipopolysaccharide to the outer membrane of the cell. This chain is Acyl-[acyl-carrier-protein]--UDP-N-acetylglucosamine O-acyltransferase, found in Vibrio vulnificus (strain CMCP6).